Reading from the N-terminus, the 979-residue chain is Mast/stem cell growth factor receptor Kit (979 aa).

Positions 1–24 are cleaved as a signal peptide; that stretch reads MRGARGAWDLLCVLLVLLRGQTAT. Over 25–527 the chain is Extracellular; the sequence is SQPSASPGEP…QIQAHTLFTP (503 aa). 3 Ig-like C2-type domains span residues 31 to 117, 126 to 210, and 217 to 315; these read PGEP…DPAK, FGKE…AAIK, and VPET…EKGF. Intrachain disulfides connect Cys58/Cys98, Cys137/Cys187, Cys152/Cys184, and Cys234/Cys293. N-linked (GlcNAc...) asparagine glycosylation is present at Asn146. N-linked (GlcNAc...) asparagine glycosylation is found at Asn296, Asn303, Asn323, Asn355, Asn370, Asn466, and Asn489. Ig-like C2-type domains are found at residues 324 to 417 and 420 to 514; these read TTVF…TKPE and TYDR…FKGN. Cys431 and Cys494 are joined by a disulfide. Residues 528 to 548 form a helical membrane-spanning segment; that stretch reads LLIGFVVAAGAMGIIVMVLTY. Residues 549–979 lie on the Cytoplasmic side of the membrane; sequence KYLQKPMYEV…TQPLLVHEDA (431 aa). Tyr550 and Tyr556 each carry phosphotyrosine; by autocatalysis. Position 571 (Tyr571) interacts with Mg(2+). Residues Tyr571 and Tyr573 each carry the phosphotyrosine modification. The tract at residues 571–573 is important for interaction with phosphotyrosine-binding proteins; the sequence is YVY. In terms of domain architecture, Protein kinase spans 592–939; that stretch reads LSFGKTLGAG…ISDSTKHIYS (348 aa). ATP is bound by residues 599–606, Lys626, and 674–680; these read GAGAFGKV and EYCCYGD. A Phosphotyrosine modification is found at Tyr706. At Ser720 the chain carries Phosphoserine. Tyr723 and Tyr732 each carry phosphotyrosine; by autocatalysis. A phosphoserine; by PKC/PRKCA mark is found at Ser743 and Ser748. Asp794 serves as the catalytic Proton acceptor. Residue Arg798 participates in ATP binding. Positions 799 and 812 each coordinate Mg(2+). Ser823 bears the Phosphoserine mark. Tyr825 bears the Phosphotyrosine; by autocatalysis mark. Ser893 carries the post-translational modification Phosphoserine. The residue at position 902 (Tyr902) is a Phosphotyrosine; by autocatalysis. Tyr938 is subject to Phosphotyrosine. Ser962 is subject to Phosphoserine.

This sequence belongs to the protein kinase superfamily. Tyr protein kinase family. CSF-1/PDGF receptor subfamily. Monomer in the absence of bound KITLG/SCF. Homodimer in the presence of bound KITLG/SCF, forming a heterotetramer with two KITLG/SCF molecules. Interacts (via phosphorylated tyrosine residues) with the adapter proteins GRB2 and GRB7 (via SH2 domain), and SH2B2/APS. Interacts (via C-terminus) with MPDZ (via the tenth PDZ domain). Interacts (via phosphorylated tyrosine residues) with the protein phosphatases PTPN6/SHP-1 (via SH2 domain), PTPN11/SHP-2 (via SH2 domain) and PTPRU. Interacts with DOK1 and TEC. Interacts with the protein kinase FES/FPS. Interacts with PLCG1. Interacts (via phosphorylated tyrosine residues) with PIK3R1 and PIK3 catalytic subunit. Interacts (KITLG/SCF-bound) with IL1RL1. Interacts with IL1RAP (independent of stimulation with KITLG/SCF). A mast cell-specific KITLG/SCF-induced interleukin-33 signaling complex contains IL1RL1, IL1RAP, KIT and MYD88. In terms of processing, ubiquitinated by SOCS6. KIT is rapidly ubiquitinated after autophosphorylation induced by KITLG/SCF binding, leading to internalization and degradation. Autophosphorylated on tyrosine residues. KITLG/SCF binding promotes autophosphorylation of isoform 1 and isoform 2. Isoform 1 shows low levels of tyrosine phosphorylation in the absence of added KITLG/SCF, while isoform 2 requires stimulation by KITLG/SCF for phosphorylation (in vitro). Phosphorylation of Tyr-573 is required for interaction with PTPN6/SHP-1. Phosphorylation of Tyr-571 is required for interaction with PTPN11/SHP-2. Phosphorylated tyrosine residues are important for interaction with specific binding partners. Isoform 1 and isoform 2 are detected in bone marrow cells, spermatogonia and spermatocytes, but not in round spermatids, elongating spermatids and spermatozoa. Isoform 3 is detected in round spermatids, elongating spermatids and spermatozoa, but not in spermatogonia and spermatocytes (at protein level). Isoform 1 is widely expressed and detected in fetal liver and bone marrow. Isoform 3 is detected in bone marrow cells enriched in hematopoietic stem cells.

It localises to the cell membrane. It is found in the cytoplasm. The enzyme catalyses L-tyrosyl-[protein] + ATP = O-phospho-L-tyrosyl-[protein] + ADP + H(+). Its activity is regulated as follows. Present in an inactive conformation in the absence of bound ligand. KITLG/SCF binding leads to dimerization and activation by autophosphorylation. In terms of biological role, tyrosine-protein kinase that acts as a cell-surface receptor for the cytokine KITLG/SCF and plays an essential role in the regulation of cell survival and proliferation, hematopoiesis, stem cell maintenance, gametogenesis, mast cell development, migration and function, and in melanogenesis. In response to KITLG/SCF binding, KIT can activate several signaling pathways. Phosphorylates PIK3R1, PLCG1, SH2B2/APS and CBL. Activates the AKT1 signaling pathway by phosphorylation of PIK3R1, the regulatory subunit of phosphatidylinositol 3-kinase. Activated KIT also transmits signals via GRB2 and activation of RAS, RAF1 and the MAP kinases MAPK1/ERK2 and/or MAPK3/ERK1. Promotes activation of STAT family members STAT1, STAT3, STAT5A and STAT5B. Activation of PLCG1 leads to the production of the cellular signaling molecules diacylglycerol and inositol 1,4,5-trisphosphate. KIT signaling is modulated by protein phosphatases, and by rapid internalization and degradation of the receptor. Activated KIT promotes phosphorylation of the protein phosphatases PTPN6/SHP-1 and PTPRU, and of the transcription factors STAT1, STAT3, STAT5A and STAT5B. Promotes phosphorylation of PIK3R1, CBL, CRK (isoform Crk-II), LYN, MAPK1/ERK2 and/or MAPK3/ERK1, PLCG1, SRC and SHC1. This chain is Mast/stem cell growth factor receptor Kit (Kit), found in Mus musculus (Mouse).